Here is a 527-residue protein sequence, read N- to C-terminus: MAKVNSGSSGCRAMVMAGQFWTKPFALSSQRSGPHRRSAAEVNRRMSSSRTAGHGSKTPLWSQQESYNHSSLGERSAWSNRTLIYRDVKAFLREIGGDPREARYWLTHFQRAGSTPAFAVLEVDPSVFDSHEMVQSLAFGLSFLQRMDMKLVVVMGLPAEITEDDHTRSATDSPLARTVMVKHCQALTEALQDNSANVMPFFSSEALLQLQDNPLDGSSSGPSVVVDSALLQWTLDCRVIPLVCPVGRDTTGRSSVLRSIQVTTAISQTLQPLKVIFLNSSGGIRNQNHKVLGLVSLPGDLPALSCAEWLNEVEQKRIGSIAELLNLLPVESSAVLTSANTLLTELFSHKGSGTLFKNGDPIRRYSSLEDIDVDRLLALINKSFEKNLREDYIASLEGRLHSVYLSEGYSAAAIITTEPVNSGTPYLDKFVVSSSKQGQGTGQILWECIRQDFSKLFWRSRTTNRINPWYFKHCDGSFVNGHWIVFWLGLSDIRESYELVEFAKSHPDSFCSLSTTETKPLQQHHGS.

A mitochondrion-targeting transit peptide spans 1–39 (MAKVNSGSSGCRAMVMAGQFWTKPFALSSQRSGPHRRSA). Positions 28–65 (SSQRSGPHRRSAAEVNRRMSSSRTAGHGSKTPLWSQQE) are disordered. The interval 40 to 83 (AEVNRRMSSSRTAGHGSKTPLWSQQESYNHSSLGERSAWSNRTL) is may stabilize the oligomeric structure. The amino-acid kinase domain (AAK) stretch occupies residues 40–361 (AEVNRRMSSS…SGTLFKNGDP (322 aa)). Residues 360–511 (DPIRRYSSLE…FAKSHPDSFC (152 aa)) enclose the N-acetyltransferase domain. Residues Lys386, Lys429, and 459–464 (RSRTTN) each bind substrate.

The protein belongs to the acetyltransferase family. Homodimer. Homotetramer.

The protein localises to the mitochondrion matrix. The enzyme catalyses L-glutamate + acetyl-CoA = N-acetyl-L-glutamate + CoA + H(+). Inhibited by L-arginine. Its function is as follows. Plays a role in the regulation of ureagenesis by producing the essential cofactor N-acetylglutamate (NAG), thus modulating carbamoylphosphate synthase I (cps1) activity. The sequence is that of N-acetylglutamate synthase, mitochondrial from Danio rerio (Zebrafish).